A 48-amino-acid chain; its full sequence is ATP synthase protein 8 (48 aa).

The chain crosses the membrane as a helical span at residues Val-13–Leu-32.

Belongs to the ATPase protein 8 family. As to quaternary structure, F-type ATPases have 2 components, CF(1) - the catalytic core - and CF(0) - the membrane proton channel.

It localises to the mitochondrion membrane. In terms of biological role, mitochondrial membrane ATP synthase (F(1)F(0) ATP synthase or Complex V) produces ATP from ADP in the presence of a proton gradient across the membrane which is generated by electron transport complexes of the respiratory chain. F-type ATPases consist of two structural domains, F(1) - containing the extramembraneous catalytic core and F(0) - containing the membrane proton channel, linked together by a central stalk and a peripheral stalk. During catalysis, ATP synthesis in the catalytic domain of F(1) is coupled via a rotary mechanism of the central stalk subunits to proton translocation. Part of the complex F(0) domain. Minor subunit located with subunit a in the membrane. The polypeptide is ATP synthase protein 8 (ATP8) (Trichophyton rubrum (Athlete's foot fungus)).